The following is a 249-amino-acid chain: Phosphate import ATP-binding protein PstB 1 (249 aa).

The 241-residue stretch at 4–244 (FNIENLDLFY…PKDDRTQGYV (241 aa)) folds into the ABC transporter domain. Position 36–43 (36–43 (GPSGCGKS)) interacts with ATP.

It belongs to the ABC transporter superfamily. Phosphate importer (TC 3.A.1.7) family. The complex is composed of two ATP-binding proteins (PstB), two transmembrane proteins (PstC and PstA) and a solute-binding protein (PstS).

The protein localises to the cell inner membrane. It carries out the reaction phosphate(out) + ATP + H2O = ADP + 2 phosphate(in) + H(+). Part of the ABC transporter complex PstSACB involved in phosphate import. Responsible for energy coupling to the transport system. This Aliivibrio fischeri (strain ATCC 700601 / ES114) (Vibrio fischeri) protein is Phosphate import ATP-binding protein PstB 1.